Consider the following 292-residue polypeptide: NAD kinase (292 aa).

Asp73 serves as the catalytic Proton acceptor. Residues 73-74, 147-148, His158, Arg175, Asp177, 188-193, and Gln247 each bind NAD(+); these read DG, NE, and TAYSLS.

This sequence belongs to the NAD kinase family. It depends on a divalent metal cation as a cofactor.

The protein localises to the cytoplasm. It carries out the reaction NAD(+) + ATP = ADP + NADP(+) + H(+). Its function is as follows. Involved in the regulation of the intracellular balance of NAD and NADP, and is a key enzyme in the biosynthesis of NADP. Catalyzes specifically the phosphorylation on 2'-hydroxyl of the adenosine moiety of NAD to yield NADP. This chain is NAD kinase, found in Photorhabdus laumondii subsp. laumondii (strain DSM 15139 / CIP 105565 / TT01) (Photorhabdus luminescens subsp. laumondii).